A 697-amino-acid chain; its full sequence is Elongation factor G (697 aa).

Residues 6-281 (ENIRNIGICA…AVVDYLPSPI (276 aa)) form the tr-type G domain. GTP is bound by residues 15–22 (AHIDAGKT), 79–83 (DTPGH), and 133–136 (NKMD).

It belongs to the TRAFAC class translation factor GTPase superfamily. Classic translation factor GTPase family. EF-G/EF-2 subfamily.

It localises to the cytoplasm. Its function is as follows. Catalyzes the GTP-dependent ribosomal translocation step during translation elongation. During this step, the ribosome changes from the pre-translocational (PRE) to the post-translocational (POST) state as the newly formed A-site-bound peptidyl-tRNA and P-site-bound deacylated tRNA move to the P and E sites, respectively. Catalyzes the coordinated movement of the two tRNA molecules, the mRNA and conformational changes in the ribosome. This Rickettsia bellii (strain OSU 85-389) protein is Elongation factor G.